Here is a 651-residue protein sequence, read N- to C-terminus: LysM domain receptor-like kinase 3 (651 aa).

Residues 1 to 19 (MNLTFYIFFLSLLPSFSSS) form the signal peptide. Residues asparagine 2, asparagine 23, asparagine 42, asparagine 73, asparagine 86, asparagine 100, asparagine 114, and asparagine 177 are each glycosylated (N-linked (GlcNAc...) asparagine). The Extracellular portion of the chain corresponds to 20–236 (KPMNCSDTTR…TAKSGSHVPY (217 aa)). Disulfide bonds link cysteine 24-cysteine 76, cysteine 31-cysteine 133, and cysteine 74-cysteine 131. The 45-residue stretch at 142 to 186 (MSYVAMAGDSVQSLSSRFGVSMDRIEDVNGILNLDNITAGDLLYI) folds into the LysM domain. The segment at 196–216 (YETSKINPPAPSPAPASSLAN) is disordered. Asparagine 218 and asparagine 225 each carry an N-linked (GlcNAc...) asparagine glycan. A helical membrane pass occupies residues 237–257 (IWIVGGLGVVLALLVLCILVC). Over 258–651 (ICLRSSSCSS…QVFSGLVQGR (394 aa)) the chain is Cytoplasmic. Threonine 330 carries the phosphothreonine modification. The region spanning 341–628 (FSDSNLLGHG…VVISLSQILL (288 aa)) is the Protein kinase domain. Residues 347-355 (LGHGNYGSV) and lysine 368 contribute to the ATP site. Tyrosine 410 is subject to Phosphotyrosine. Aspartate 464 functions as the Proton acceptor in the catalytic mechanism. Serine 468 is modified (phosphoserine). Threonine 500 and threonine 505 each carry phosphothreonine. Phosphotyrosine is present on tyrosine 513.

Belongs to the protein kinase superfamily. Ser/Thr protein kinase family.

It localises to the cell membrane. Its function is as follows. Putative Lysin motif (LysM) receptor kinase that may recognize microbe-derived N-acetylglucosamine (NAG)-containing ligands. This Arabidopsis thaliana (Mouse-ear cress) protein is LysM domain receptor-like kinase 3 (LYK3).